Consider the following 1070-residue polypeptide: DNA-directed RNA polymerase subunit beta (1070 aa).

The protein belongs to the RNA polymerase beta chain family. As to quaternary structure, in plastids the minimal PEP RNA polymerase catalytic core is composed of four subunits: alpha, beta, beta', and beta''. When a (nuclear-encoded) sigma factor is associated with the core the holoenzyme is formed, which can initiate transcription.

The protein localises to the plastid. The protein resides in the chloroplast. The catalysed reaction is RNA(n) + a ribonucleoside 5'-triphosphate = RNA(n+1) + diphosphate. In terms of biological role, DNA-dependent RNA polymerase catalyzes the transcription of DNA into RNA using the four ribonucleoside triphosphates as substrates. In Cucumis sativus (Cucumber), this protein is DNA-directed RNA polymerase subunit beta.